Here is a 61-residue protein sequence, read N- to C-terminus: Small ribosomal subunit protein uS14 (61 aa).

The Zn(2+) site is built by Cys24, Cys27, Cys40, and Cys43.

This sequence belongs to the universal ribosomal protein uS14 family. Zinc-binding uS14 subfamily. As to quaternary structure, part of the 30S ribosomal subunit. Contacts proteins S3 and S10. It depends on Zn(2+) as a cofactor.

Functionally, binds 16S rRNA, required for the assembly of 30S particles and may also be responsible for determining the conformation of the 16S rRNA at the A site. In Elusimicrobium minutum (strain Pei191), this protein is Small ribosomal subunit protein uS14.